We begin with the raw amino-acid sequence, 473 residues long: Flagellum-specific ATP synthase (473 aa).

187–194 is a binding site for ATP; the sequence is AGSGVGKS.

The protein belongs to the ATPase alpha/beta chains family.

It localises to the cytoplasm. The enzyme catalyses ATP + H2O + 4 H(+)(in) = ADP + phosphate + 5 H(+)(out). In terms of biological role, probable catalytic subunit of a protein translocase for flagellum-specific export, or a proton translocase involved in local circuits at the flagellum. The protein is Flagellum-specific ATP synthase (fliI) of Agrobacterium fabrum (strain C58 / ATCC 33970) (Agrobacterium tumefaciens (strain C58)).